The following is a 332-amino-acid chain: Ketol-acid reductoisomerase (NADP(+)) (332 aa).

A KARI N-terminal Rossmann domain is found at 2–182 (ANIYYDEDAS…GATRAGLIET (181 aa)). NADP(+)-binding positions include 25–28 (YGSQ), S51, S53, and 83–86 (DTVQ). Residue H108 is part of the active site. An NADP(+)-binding site is contributed by G134. The 145-residue stretch at 183–327 (TFKEETETDL…KELRKMMPWL (145 aa)) folds into the KARI C-terminal knotted domain. Mg(2+)-binding residues include D191, E195, E227, and E231. S252 is a binding site for substrate.

Belongs to the ketol-acid reductoisomerase family. The cofactor is Mg(2+).

The catalysed reaction is (2R)-2,3-dihydroxy-3-methylbutanoate + NADP(+) = (2S)-2-acetolactate + NADPH + H(+). The enzyme catalyses (2R,3R)-2,3-dihydroxy-3-methylpentanoate + NADP(+) = (S)-2-ethyl-2-hydroxy-3-oxobutanoate + NADPH + H(+). The protein operates within amino-acid biosynthesis; L-isoleucine biosynthesis; L-isoleucine from 2-oxobutanoate: step 2/4. Its pathway is amino-acid biosynthesis; L-valine biosynthesis; L-valine from pyruvate: step 2/4. In terms of biological role, involved in the biosynthesis of branched-chain amino acids (BCAA). Catalyzes an alkyl-migration followed by a ketol-acid reduction of (S)-2-acetolactate (S2AL) to yield (R)-2,3-dihydroxy-isovalerate. In the isomerase reaction, S2AL is rearranged via a Mg-dependent methyl migration to produce 3-hydroxy-3-methyl-2-ketobutyrate (HMKB). In the reductase reaction, this 2-ketoacid undergoes a metal-dependent reduction by NADPH to yield (R)-2,3-dihydroxy-isovalerate. This is Ketol-acid reductoisomerase (NADP(+)) from Sulfurihydrogenibium sp. (strain YO3AOP1).